We begin with the raw amino-acid sequence, 3010 residues long: Genome polyprotein (3010 aa).

Residue S2 is modified to N-acetylserine; by host. The interval 2–23 (STNPKPQRKTKRNTYRRPQDVK) is interaction with STAT1. The interaction with EIF2AK2/PKR stretch occupies residues 2–58 (STNPKPQRKTKRNTYRRPQDVKFPGGGQIVGGVYVLPRRGPTLGVRATRKTSERSQP). Residues 2–59 (STNPKPQRKTKRNTYRRPQDVKFPGGGQIVGGVYVLPRRGPTLGVRATRKTSERSQPR) form an interaction with DDX3X region. A disordered region spans residues 2–75 (STNPKPQRKT…PKARRPEGRA (74 aa)). Residues 2-168 (STNPKPQRKT…EDGVNYATGN (167 aa)) are Cytoplasmic-facing. 2 short sequence motifs (nuclear localization signal) span residues 5–13 (PKPQRKTKR) and 38–43 (PRRGPT). Over residues 7–16 (PQRKTKRNTY) the composition is skewed to basic residues. S53 bears the Phosphoserine; by host mark. 2 consecutive short sequence motifs (nuclear localization signal) follow at residues 58–64 (PRGRRQP) and 66–71 (PKARRP). Residues 58–68 (PRGRRQPIPKA) are compositionally biased toward basic residues. Residue S99 is modified to Phosphoserine; by host. The tract at residues 112-152 (PRRRSRNLGKVIDTLTCGFADLMGYIPLVGAPLGGAARALA) is important for endoplasmic reticulum and mitochondrial localization. S116 is modified (phosphoserine; by host PKA). The tract at residues 122 to 173 (VIDTLTCGFADLMGYIPLVGAPLGGAARALAHGVRVLEDGVNYATGNLPGCS) is interaction with APOA2. Residues 164–167 (YATG) form an important for lipid droplets localization region. The chain crosses the membrane as a helical span at residues 169-189 (LPGCSFSIFLLALLSCLTIPA). A propeptide spans 178 to 191 (LLALLSCLTIPASA) (ER anchor for the core protein, removed in mature form by host signal peptidase). Topologically, residues 190–358 (SAYQVRNASG…AGAHWGVLAG (169 aa)) are lumenal. N-linked (GlcNAc...) asparagine; by host glycans are attached at residues N196, N209, N234, and N250. The interval 265 to 296 (LVGAAAFCSAMYVGDLCGSVFLVSQLFTFSPR) is important for fusion. N305 is a glycosylation site (N-linked (GlcNAc...) asparagine; by host). A helical membrane pass occupies residues 359–379 (LAYYSMVGNWAKVLIVMLLFA). The Lumenal portion of the chain corresponds to 380 to 725 (GVDGVTYTTG…WEYIVLLFLL (346 aa)). Positions 385–411 (TYTTGGSQARHTQSVTSFFTQGPAQRI) are HVR1. 4 N-linked (GlcNAc...) (high mannose) asparagine; by host glycosylation sites follow: N417, N423, N430, and N448. 4 disulfides stabilise this stretch: C429–C552, C452–C459, C486–C494, and C503–C508. Residues 474 to 479 (YTEPRD) are HVR2. Positions 480–493 (LDQRPYCWHYAPRQ) are CD81-binding 1. N-linked (GlcNAc...) (high mannose) asparagine; by host glycosylation is present at N532. N540 carries an N-linked (GlcNAc...) asparagine; by host glycan. A CD81-binding 2 region spans residues 544-551 (PPQGNWFG). An N-linked (GlcNAc...) (high mannose) asparagine; by host glycan is attached at N556. Residues C564 and C569 are joined by a disulfide bond. N-linked (GlcNAc...) (high mannose) asparagine; by host glycosylation is present at N576. Intrachain disulfides connect C581/C585, C597/C620, and C607/C644. N-linked (GlcNAc...) (high mannose) asparagine; by host glycosylation is found at N623 and N645. The cysteines at positions 652 and 677 are disulfide-linked. The segment at 660–671 (SELSPLLLSTTE) is PKR/eIF2-alpha phosphorylation homology domain (PePHD). Residues 726–746 (LADARVCACLWMMLLIAQAEA) form a helical membrane-spanning segment. Topologically, residues 747–757 (ALENLVVLNAA) are lumenal. The chain crosses the membrane as a helical span at residues 758–778 (SLAGADGILSFLVFFCAAWYI). The Cytoplasmic portion of the chain corresponds to 779-781 (KGR). Residues 782-803 (LVPGAAYALYGVWPLLLLLLAL) form a helical membrane-spanning segment. At 804-813 (PPRAYAMDRE) the chain is on the lumenal side. Residues 814–834 (MAASCGGVVFVGLILLTLSPH) form a helical membrane-spanning segment. Residues 835–838 (YKVF) are Cytoplasmic-facing. The helical transmembrane segment at 839 to 859 (LARLIWWLQYFITRAEAHLCV) threads the bilayer. The Lumenal portion of the chain corresponds to 860–881 (WVPPLNVRGGRDAIILLTCAAH). The helical transmembrane segment at 882–902 (PELIFDITKLLLAILGPLMVL) threads the bilayer. Residues 903–1026 (QAAITAMPYF…SIEGQGWRLL (124 aa)) enclose the Peptidase C18 domain. The Cytoplasmic portion of the chain corresponds to 903–1657 (QAAITAMPYF…CMSADLEVVT (755 aa)). The protease NS2-3 stretch occupies residues 904–1206 (AAITAMPYFV…PVESMETTMR (303 aa)). The S-palmitoyl cysteine; by host moiety is linked to residue C922. An interaction with host SCPS1 region spans residues 929–949 (AGGHYVQMAFMKLAALTGTYV). Catalysis depends on for protease NS2 activity; shared with dimeric partner residues H952, E972, and C993. In terms of domain architecture, Peptidase S29 spans 1027-1208 (APITAYAQQT…ESMETTMRSP (182 aa)). Active-site charge relay system; for serine protease NS3 activity residues include H1083 and D1107. Zn(2+)-binding residues include C1123 and C1125. The active-site Charge relay system; for serine protease NS3 activity is the S1165. Positions 1171 and 1175 each coordinate Zn(2+). The Helicase ATP-binding domain maps to 1217 to 1369 (PAVPQTFQVA…PNIEEVALSN (153 aa)). ATP is bound at residue 1230-1237 (APTGSGKS). The Mg(2+) site is built by S1237 and E1317. A DECH box motif is present at residues 1316–1319 (DECH). Positions 1486-1497 (QRRGRTGRGRGG) are RNA-binding. The helical transmembrane segment at 1658–1678 (STWVLVGGVLAALAAYCLTTG) threads the bilayer. The NS3-binding stretch occupies residues 1679 to 1690 (SVVIVGRIILSG). At 1679-1805 (SVVIVGRIIL…SITSPLTTQN (127 aa)) the chain is on the cytoplasmic side. Residues 1806-1824 (TLLFNILGGWVAAQLAPPS) form a helical membrane-spanning segment. Residues 1825 to 1828 (AASA) are Lumenal-facing. A helical transmembrane segment spans residues 1829–1849 (FVGAGIAGAAIGSIGLGKVLV). Residue D1850 is a topological domain, cytoplasmic. The helical transmembrane segment at 1851–1871 (ILAGYGAGVAGALVAFKVMSG) threads the bilayer. Over 1872 to 1881 (EAPSAEDLVN) the chain is Lumenal. Residues 1882-1902 (LLPAILSPGALVVGVVCAAIL) traverse the membrane as a helical segment. Over 1903-1972 (RRHVGPGEGA…WINEDCSTPC (70 aa)) the chain is Cytoplasmic. S-palmitoyl cysteine; by host attachment occurs at residues C1968 and C1972. The stretch at 1973–2002 (SGSWLKDVWDWICTVLTDFKTWLQSKLLPK) is an intramembrane region. Over 2003–2989 (LPGVPFFSCQ…YHSLSRARPR (987 aa)) the chain is Cytoplasmic. Zn(2+)-binding residues include C2011, C2029, C2031, and C2052. The segment at 2120 to 2208 (EFFTELDGVR…ASSSASQLSA (89 aa)) is FKBP8-binding. The tract at residues 2120-2332 (EFFTELDGVR…PIPPPRKKRT (213 aa)) is transcriptional activation. Residues 2135–2139 (PACRP) are interaction with non-structural protein 4A. The interval 2187–2220 (KRRLARGSPPSLASSSASQLSAPSLKATCTTHHD) is disordered. Residues 2189 to 2441 (RLARGSPPSL…PCAAEESKLP (253 aa)) form an interaction with host SKP2 region. Position 2194 is a phosphoserine; by host; in p56 (S2194). A compositionally biased stretch (low complexity) spans 2194–2211 (SPPSLASSSASQLSAPSL). Residues S2197, S2201, S2204, S2207, and S2210 each carry the phosphoserine; by host; in p58 modification. The tract at residues 2210-2249 (SLKATCTTHHDSPDADLIEANLLWRQEMGGNITRVESENK) is ISDR. The segment at 2210–2275 (SLKATCTTHH…REVSVAAEIL (66 aa)) is interaction with EIF2AK2/PKR. The segment at 2249–2306 (KVVILDSFDPLRAEEDEREVSVAAEILRKSKKFPPALPIWARPDYNPPLLESWKSPDY) is NS4B-binding. Positions 2322–2325 (PPIP) match the SH3-binding motif. The Nuclear localization signal signature appears at 2326 to 2334 (PPRKKRTVV). A Glycyl lysine isopeptide (Lys-Gly) (interchain with G-Cter in ubiquitin) cross-link involves residue K2350. Residues 2351-2371 (TFGSSGSSAVDSGTATAPPDQ) show a composition bias toward polar residues. Residues 2351–2408 (TFGSSGSSAVDSGTATAPPDQTSDDGDKESDVESYSSMPPLEGEPGDPDLSDGSWSTV) are disordered. Residues 2354-2377 (SSGSSAVDSGTATAPPDQTSDDGD) are V3. Residues 2372–2382 (TSDDGDKESDV) show a composition bias toward acidic residues. Phosphoserine; by host is present on residues S2448 and S2461. The 119-residue stretch at 2633–2751 (PMGFSYDTRC…ICESAGTQED (119 aa)) folds into the RdRp catalytic domain. The Mg(2+) site is built by D2639, D2737, and D2738. The chain crosses the membrane as a helical span at residues 2990-3010 (WFMWCLLLLSVGVGIYLLPNR).

It belongs to the hepacivirus polyprotein family. Homooligomer. Interacts with E1 (via C-terminus). Interacts with the non-structural protein 5A. Interacts (via N-terminus) with host STAT1 (via SH2 domain); this interaction results in decreased STAT1 phosphorylation and ubiquitin-mediated proteasome-dependent STAT1 degradation, leading to decreased IFN-stimulated gene transcription. Interacts with host STAT3; this interaction constitutively activates STAT3. Interacts with host LTBR receptor. Interacts with host TNFRSF1A receptor and possibly induces apoptosis. Interacts with host HNRPK. Interacts with host YWHAE. Interacts with host UBE3A/E6AP. Interacts with host DDX3X. Interacts with host APOA2. Interacts with host RXRA protein. Interacts with host SP110 isoform 3/Sp110b; this interaction sequesters the transcriptional corepressor SP110 away from the nucleus. Interacts with host CREB3 nuclear transcription protein; this interaction triggers cell transformation. Interacts with host ACY3. Interacts with host C1QR1. Interacts with host RBM24; this interaction, which enhances the interaction of the mature core protein with 5'-UTR, may inhibit viral translation and favor replication. Interacts with host EIF2AK2/PKR; this interaction induces the autophosphorylation of EIF2AK2. Part of the viral assembly initiation complex composed of NS2, E1, E2, NS3, NS4A, NS5A and the mature core protein. As to quaternary structure, forms a heterodimer with envelope glycoprotein E2. Interacts with mature core protein. Interacts with protease NS2. The heterodimer E1/E2 interacts with host CLDN1; this interaction plays a role in viral entry into host cell. Interacts with host SPSB2 (via C-terminus). Part of the viral assembly initiation complex composed of NS2, E1, E2, NS3, NS4A, NS5A and the mature core protein. Interacts with host NEURL3; this interaction prevents E1 binding to glycoprotein E2. In terms of assembly, forms a heterodimer with envelope glycoprotein E1. Interacts with host CD81 and SCARB1 receptors; these interactions play a role in viral entry into host cell. Interacts with host EIF2AK2/PKR; this interaction inhibits EIF2AK2 and probably allows the virus to evade the innate immune response. Interacts with host CD209/DC-SIGN and CLEC4M/DC-SIGNR. Interact with host SPCS1; this interaction is essential for viral particle assembly. Interacts with protease NS2. The heterodimer E1/E2 interacts with host CLDN1; this interaction plays a role in viral entry into host cell. Part of the viral assembly initiation complex composed of NS2, E1, E2, NS3, NS4A, NS5A and the mature core protein. Interacts with host SLC3A2/4F2hc; the interaction may facilitate viral entry into host cell. Interacts with human PLSCR1. Homohexamer. Homoheptamer. Interacts with protease NS2. As to quaternary structure, homodimer. Interacts with host SPCS1; this interaction is essential for viral particle assembly. Interacts with envelope glycoprotein E1. Interacts with envelope glycoprotein E2. Interacts with viroporin p7. Interacts with serine protease/helicase NS3. Part of the replication complex composed of NS2, NS3, NS4A, NS4B, NS5A and the RNA-directed RNA polymerase embedded in an ER-derived membranous web. Part of the viral assembly initiation complex composed of NS2, E1, E2, NS3, NS4A, NS5A and the mature core protein. In terms of assembly, interacts with protease NS2. Interacts with non-structural protein 4A; this interaction stabilizes the folding of NS3 serine protease. NS3-NS4A interaction is essential for NS3 activation and allows membrane anchorage of the latter. NS3/NS4A complex also prevents phosphorylation of host IRF3, thus preventing the establishment of dsRNA induced antiviral state. Interacts with host MAVS; this interaction leads to the cleavage and inhibition of host MAVS. Interacts with host TICAM1; this interaction leads to the cleavage and inhibition of host TICAM1. Interacts with host TANK-binding kinase/TBK1; this interaction results in the inhibition of the association between TBK1 and IRF3, which leads to the inhibition of IRF3 activation. Interacts with host RBM24. Part of the replication complex composed of NS2, NS3, NS4A, NS4B, NS5A and the RNA-directed RNA polymerase embedded in an ER-derived membranous web. Part of the viral assembly initiation complex composed of NS2, E1, E2, NS3, NS4A, NS5A and the mature core protein. Interacts with NS3 serine protease; this interaction stabilizes the folding of NS3 serine protease. NS3-NS4A interaction is essential for NS3 activation and allows membrane anchorage of the latter. Interacts with non-structural protein 5A (via N-terminus). Part of the replication complex composed of NS2, NS3, NS4A, NS4B, NS5A and the RNA-directed RNA polymerase embedded in an ER-derived membranous web. Part of the viral assembly initiation complex composed of NS2, E1, E2, NS3, NS4A, NS5A and the mature core protein. As to quaternary structure, homomultimer. Interacts with non-structural protein NS5A. Interacts with host PLA2G4C; this interaction likely initiates the recruitment of replication complexes to lipid droplets. Interacts with host STING; this interaction disrupts the interaction between STING and TBK1 thereby suppressing the interferon signaling. Part of the replication complex composed of NS2, NS3, NS4A, NS4B, NS5A and the RNA-directed RNA polymerase embedded in an ER-derived membranous web. In terms of assembly, monomer. Homodimer; dimerization is required for RNA-binding. Interacts with the mature core protein. Interacts (via N-terminus) with non-structural protein 4A. Interacts with non-structural protein 4B. Interacts (via region D2) with RNA-directed RNA polymerase. Part of the viral assembly initiation complex composed of NS2, E1, E2, NS3, NS4A, NS5A and the mature core protein. Part of the replication complex composed of NS2, NS3, NS4A, NS4B, NS5A and the RNA-directed RNA polymerase embedded in an ER-derived membranous web. Interacts with host GRB2. Interacts with host BIN1. Interacts with host PIK3R1. Interacts with host SRCAP. Interacts with host FKBP8. Interacts (via C-terminus) with host VAPB (via MSP domain). Interacts with host EIF2AK2/PKR; this interaction leads to disruption of EIF2AK2 dimerization by NS5A and probably allows the virus to evade the innate immune response. Interacts (via N-terminus) with host PACSIN2 (via N-terminus); this interaction attenuates protein kinase C alpha-mediated phosphorylation of PACSIN2 by disrupting the interaction between PACSIN2 and PRKCA. Interacts (via N-terminus) with host SRC kinase (via SH2 domain). Interacts with most Src-family kinases. Interacts with host IFI27 and SKP2; promotes the ubiquitin-mediated proteasomal degradation of NS5A. Interacts with host GPS2. Interacts with host TNFRSF21; this interaction allows the modulation by the virus of JNK, p38 MAPK, STAT3, and Akt signaling pathways in a DR6-dependent manner. Interacts (via N-terminus) with host CIDEB (via N-terminus); this interaction seems to regulate the association of HCV particles with APOE. Interacts with host CHKA/Choline Kinase-alpha; CHKA bridges host PI4KA and NS5A and potentiates NS5A-stimulated PI4KA activity, which then facilitates the targeting of the ternary complex to the ER for viral replication. Interacts with host SPSB2 (via C-terminus); this interaction targets NS5A for ubiquitination and degradation. Interacts with host RAB18; this interaction may promote the association of NS5A and other replicase components with lipid droplets. Interacts (via region D2) with host PPIA/CYPA; the interaction stimulates RNA-binding ability of NS5A and is dependent on the peptidyl-prolyl cis-trans isomerase activity of PPIA/CYPA. Interacts with host TRIM14; this interaction induces the degradation of NS5A. Homooligomer. Interacts with non-structural protein 5A. Interacts with host VAPB. Interacts with host PRK2/PKN2. Interacts with host HNRNPA1 and SEPT6; these interactions facilitate viral replication. Part of the replication complex composed of NS2, NS3, NS4A, NS4B, NS5A and the RNA-directed RNA polymerase. The cofactor is Zn(2+). Mg(2+) serves as cofactor. In terms of processing, specific enzymatic cleavages in vivo yield mature proteins. The structural proteins, core, E1, E2 and p7 are produced by proteolytic processing by host signal peptidases. The core protein precursor is synthesized as a 23 kDa, which is retained in the ER membrane through the hydrophobic signal peptide. Cleavage by the signal peptidase releases the 21 kDa mature core protein. The cleavage of the core protein precursor occurs between aminoacids 176 and 188 but the exact cleavage site is not known. Some degraded forms of the core protein appear as well during the course of infection. The other proteins (p7, NS2, NS3, NS4A, NS4B, NS5A and NS5B) are cleaved by the viral proteases. Autoprocessing between NS2 and NS3 is mediated by the NS2 cysteine protease catalytic domain and regulated by the NS3 N-terminal domain. Phosphorylated by host PKC and PKA. Post-translationally, ubiquitinated; mediated by UBE3A and leading to core protein subsequent proteasomal degradation. In terms of processing, highly N-glycosylated. Palmitoylation is required for NS2/3 autoprocessing and E2 recruitment to membranes. Post-translationally, palmitoylated. This modification may play a role in its polymerization or in protein-protein interactions. In terms of processing, phosphorylated on serines in a basal form termed p56. p58 is a hyperphosphorylated form of p56. p56 and p58 coexist in the cell in roughly equivalent amounts. Hyperphosphorylation is dependent on the presence of NS4A. Host CSNK1A1/CKI-alpha or RPS6KB1 kinases may be responsible for NS5A phosphorylation. Tyrosine phosphorylation is essential for the interaction with host SRC. Post-translationally, ubiquitinated. Ubiquitination, most probably at Lys-2350, mediated by host IFI27 and SKP2 leads to proteasomal degradation, restricting viral infection. Ubiquitination by host TRIM22 leads to interruption of viral replication. In terms of processing, the N-terminus is phosphorylated by host PRK2/PKN2.

The protein resides in the host endoplasmic reticulum membrane. Its subcellular location is the host mitochondrion membrane. It localises to the virion. The protein localises to the host cytoplasm. It is found in the host nucleus. The protein resides in the host lipid droplet. Its subcellular location is the virion membrane. It localises to the host mitochondrion. The protein localises to the host cell membrane. It is found in the host perinuclear region. The enzyme catalyses Hydrolysis of four peptide bonds in the viral precursor polyprotein, commonly with Asp or Glu in the P6 position, Cys or Thr in P1 and Ser or Ala in P1'.. It catalyses the reaction a ribonucleoside 5'-triphosphate + H2O = a ribonucleoside 5'-diphosphate + phosphate + H(+). It carries out the reaction ATP + H2O = ADP + phosphate + H(+). The catalysed reaction is RNA(n) + a ribonucleoside 5'-triphosphate = RNA(n+1) + diphosphate. With respect to regulation, inhibited by the antiviral drug hexamethylene amiloride. Inhibition by amantadine appears to be genotype-dependent. Also inhibited by long-alkyl-chain iminosugar derivatives. Activity is up-regulated by PRK2/PKN2-mediated phosphorylation. Packages viral RNA to form a viral nucleocapsid, and promotes virion budding. Participates in the viral particle production as a result of its interaction with the non-structural protein 5A. Binds RNA and may function as a RNA chaperone to induce the RNA structural rearrangements taking place during virus replication. Modulates viral translation initiation by interacting with viral IRES and 40S ribosomal subunit. Affects various cell signaling pathways, host immunity and lipid metabolism. Prevents the establishment of cellular antiviral state by blocking the interferon-alpha/beta (IFN-alpha/beta) and IFN-gamma signaling pathways and by blocking the formation of phosphorylated STAT1 and promoting ubiquitin-mediated proteasome-dependent degradation of STAT1. Activates STAT3 leading to cellular transformation. Regulates the activity of cellular genes, including c-myc and c-fos. May repress the promoter of p53, and sequester CREB3 and SP110 isoform 3/Sp110b in the cytoplasm. Represses cell cycle negative regulating factor CDKN1A, thereby interrupting an important check point of normal cell cycle regulation. Targets transcription factors involved in the regulation of inflammatory responses and in the immune response: suppresses TNF-induced NF-kappa-B activation, and activates AP-1. Binds to dendritic cells (DCs) via C1QR1, resulting in down-regulation of T-lymphocytes proliferation. Alters lipid metabolism by interacting with hepatocellular proteins involved in lipid accumulation and storage. Induces up-regulation of FAS promoter activity, and thereby contributes to the increased triglyceride accumulation in hepatocytes (steatosis). Its function is as follows. Forms a heterodimer with envelope glycoprotein E2, which mediates virus attachment to the host cell, virion internalization through clathrin-dependent endocytosis and fusion with host membrane. Fusion with the host cell is most likely mediated by both E1 and E2, through conformational rearrangements of the heterodimer required for fusion rather than a classical class II fusion mechanism. E1/E2 heterodimer binds host apolipoproteins such as APOB and ApoE thereby forming a lipo-viro-particle (LVP). APOE associated to the LVP allows the initial virus attachment to cell surface receptors such as the heparan sulfate proteoglycans (HSPGs), syndecan-1 (SDC1), syndecan-1 (SDC2), the low-density lipoprotein receptor (LDLR) and scavenger receptor class B type I (SCARB1). The cholesterol transfer activity of SCARB1 allows E2 exposure and binding of E2 to SCARB1 and the tetraspanin CD81. E1/E2 heterodimer binding on CD81 activates the epithelial growth factor receptor (EGFR) signaling pathway. Diffusion of the complex E1-E2-EGFR-SCARB1-CD81 to the cell lateral membrane allows further interaction with Claudin 1 (CLDN1) and occludin (OCLN) to finally trigger HCV entry. Functionally, forms a heterodimer with envelope glycoprotein E1, which mediates virus attachment to the host cell, virion internalization through clathrin-dependent endocytosis and fusion with host membrane. Fusion with the host cell is most likely mediated by both E1 and E2, through conformational rearrangements of the heterodimer required for fusion rather than a classical class II fusion mechanism. The interaction between envelope glycoprotein E2 and host apolipoprotein E/APOE allows the proper assembly, maturation and infectivity of the viral particles. This interaction is probably promoted via the up-regulation of cellular autophagy by the virus. E1/E2 heterodimer binds host apolipoproteins such as APOB and APOE thereby forming a lipo-viro-particle (LVP). APOE associated to the LVP allows the initial virus attachment to cell surface receptors such as the heparan sulfate proteoglycans (HSPGs), syndecan-1 (SDC1), syndecan-1 (SDC2), the low-density lipoprotein receptor (LDLR) and scavenger receptor class B type I (SCARB1). The cholesterol transfer activity of SCARB1 allows E2 exposure and binding of E2 to SCARB1 and the tetraspanin CD81. E1/E2 heterodimer binding on CD81 activates the epithelial growth factor receptor (EGFR) signaling pathway. Diffusion of the complex E1-E2-EGFR-SCARB1-CD81 to the cell lateral membrane allows further interaction with Claudin 1 (CLDN1) and occludin (OCLN) to finally trigger HCV entry. Inhibits host EIF2AK2/PKR activation, preventing the establishment of an antiviral state. Viral ligand for CD209/DC-SIGN and CLEC4M/DC-SIGNR, which are respectively found on dendritic cells (DCs), and on liver sinusoidal endothelial cells and macrophage-like cells of lymph node sinuses. These interactions allow the capture of circulating HCV particles by these cells and subsequent facilitated transmission to permissive cells such as hepatocytes and lymphocyte subpopulations. The interaction between E2 and host amino acid transporter complex formed by SLC3A2 and SLC7A5/LAT1 may facilitate viral entry into host cell. In terms of biological role, ion channel protein that acts as a viroporin and plays an essential role in the assembly, envelopment and secretion of viral particles. Regulates the host cell secretory pathway, which induces the intracellular retention of viral glycoproteins and favors assembly of viral particles. Creates a pore in acidic organelles and releases Ca(2+) and H(+) in the cytoplasm of infected cells, leading to a productive viral infection. High levels of cytoplasmic Ca(2+) may trigger membrane trafficking and transport of viral ER-associated proteins to viroplasms, sites of viral genome replication. This ionic imbalance induces the assembly of the inflammasome complex, which triggers the maturation of pro-IL-1beta into IL-1beta through the action of caspase-1. Targets also host mitochondria and induces mitochondrial depolarization. In addition of its role as a viroporin, acts as a lipid raft adhesion factor. Cysteine protease required for the proteolytic auto-cleavage between the non-structural proteins NS2 and NS3. The N-terminus of NS3 is required for the function of NS2 protease (active region NS2-3). Promotes the initiation of viral particle assembly by mediating the interaction between structural and non-structural proteins. Its function is as follows. Displays three enzymatic activities: serine protease with a chymotrypsin-like fold, NTPase and RNA helicase. NS3 serine protease, in association with NS4A, is responsible for the cleavages of NS3-NS4A, NS4A-NS4B, NS4B-NS5A and NS5A-NS5B. The NS3/NS4A complex prevents phosphorylation of host IRF3, thus preventing the establishment of dsRNA induced antiviral state. The NS3/NS4A complex induces host amino acid transporter component SLC3A2, thus contributing to HCV propagation. NS3 RNA helicase binds to RNA and unwinds both dsDNA and dsRNA in the 3' to 5' direction, and likely resolves RNA complicated stable secondary structures in the template strand. Binds a single ATP and catalyzes the unzipping of a single base pair of dsRNA. Inhibits host antiviral proteins TBK1 and IRF3 thereby preventing the establishment of an antiviral state. Cleaves host MAVS/CARDIF thereby preventing the establishment of an antiviral state. Cleaves host TICAM1/TRIF, thereby disrupting TLR3 signaling and preventing the establishment of an antiviral state. Functionally, induces a specific membrane alteration that serves as a scaffold for the virus replication complex. This membrane alteration gives rise to the so-called ER-derived membranous web that contains the replication complex. NS4B self-interaction contributes to its function in membranous web formation. Promotes host TRIF protein degradation in a CASP8-dependent manner thereby inhibiting host TLR3-mediated interferon signaling. Disrupts the interaction between STING and TBK1 contributing to the inhibition of interferon signaling. In terms of biological role, phosphorylated protein that is indispensable for viral replication and assembly. Both hypo- and hyperphosphorylated states are required for the viral life cycle. The hyperphosphorylated form of NS5A is an inhibitor of viral replication. Involved in RNA-binding and especially in binding to the viral genome. Zinc is essential for RNA-binding. Participates in the viral particle production as a result of its interaction with the mature viral core protein. Its interaction with host VAPB may target the viral replication complex to vesicles. Down-regulates viral IRES translation initiation. Mediates interferon resistance, presumably by interacting with and inhibiting host EIF2AK2/PKR. Prevents BIN1-induced apoptosis. Acts as a transcriptional activator of some host genes important for viral replication when localized in the nucleus. Via the interaction with host PACSIN2, modulates lipid droplet formation in order to promote virion assembly. Modulates TNFRSF21/DR6 signaling pathway for viral propagation. RNA-dependent RNA polymerase that performs primer-template recognition and RNA synthesis during viral replication. Initiates RNA transcription/replication at a flavin adenine dinucleotide (FAD), resulting in a 5'- FAD cap on viral RNAs. In this way, recognition of viral 5' RNA by host pattern recognition receptors can be bypassed, thereby evading activation of antiviral pathways. Its function is as follows. Peptide cofactor which forms a non-covalent complex with the N-terminal of NS3 serine protease. The NS3/NS4A complex prevents phosphorylation of host IRF3, thus preventing the establishment of dsRNA induced antiviral state. The NS3/NS4A complex induces host amino acid transporter component SLC3A2, thus contributing to HCV propagation. In Homo sapiens (Human), this protein is Genome polyprotein.